Consider the following 362-residue polypeptide: Peptide chain release factor 1 (362 aa).

The residue at position 235 (Gln-235) is an N5-methylglutamine.

This sequence belongs to the prokaryotic/mitochondrial release factor family. Post-translationally, methylated by PrmC. Methylation increases the termination efficiency of RF1.

The protein resides in the cytoplasm. Its function is as follows. Peptide chain release factor 1 directs the termination of translation in response to the peptide chain termination codons UAG and UAA. This chain is Peptide chain release factor 1, found in Variovorax paradoxus (strain S110).